The following is a 279-amino-acid chain: Early nodulin-like protein 18 (279 aa).

The N-terminal stretch at 1–24 (MAGAVATVSVGLAWLGLMAAAASA) is a signal peptide. Residues 25 to 133 (TQFRVGGGRG…GEKLVVVVMA (109 aa)) enclose the Phytocyanin domain. Residues Cys82 and Cys121 are joined by a disulfide bond. The N-linked (GlcNAc...) asparagine glycan is linked to Asn83. The interval 138-256 (RHAPPPSPPA…ANDRSGAAAA (119 aa)) is disordered. Over residues 140-168 (APPPSPPAVPPPVAPVPMPSPASSPPSPA) the composition is skewed to pro residues. A compositionally biased stretch (low complexity) spans 169 to 185 (PAAATPSLAPSPVATTP). Over residues 186 to 199 (SPSPSVSPMAPAPA) the composition is skewed to pro residues. Composition is skewed to low complexity over residues 212 to 226 (AAMA…GGVA) and 234 to 256 (TDGA…AAAA). Asn238 carries N-linked (GlcNAc...) asparagine glycosylation. The GPI-anchor amidated serine moiety is linked to residue Ser251. Positions 252 to 279 (GAAAAAPVVAGVVVTSLGAYIGYAMLAI) are cleaved as a propeptide — removed in mature form.

This sequence belongs to the early nodulin-like (ENODL) family. Specifically expressed in reproductive tissues. Mainly observed in developing seeds and in mature leaves.

It localises to the cell membrane. Its function is as follows. May act as a carbohydrate transporter. Promotes tolerance to salt stress in a redox-dependent manner. In Oryza sativa subsp. japonica (Rice), this protein is Early nodulin-like protein 18.